A 79-amino-acid polypeptide reads, in one-letter code: Virulence protein MsgA (79 aa).

The protein belongs to the DinI family.

Affects survival in macrophages. The chain is Virulence protein MsgA (msgA) from Salmonella typhi.